Here is a 142-residue protein sequence, read N- to C-terminus: Ribosome-binding factor A (142 aa).

Basic and acidic residues predominate over residues 118–130 (DKAKQKQAGREDD). Residues 118-142 (DKAKQKQAGREDDTPSVDEQEKDTD) are disordered. Acidic residues predominate over residues 131–142 (TPSVDEQEKDTD).

The protein belongs to the RbfA family. Monomer. Binds 30S ribosomal subunits, but not 50S ribosomal subunits or 70S ribosomes.

Its subcellular location is the cytoplasm. Functionally, one of several proteins that assist in the late maturation steps of the functional core of the 30S ribosomal subunit. Associates with free 30S ribosomal subunits (but not with 30S subunits that are part of 70S ribosomes or polysomes). Required for efficient processing of 16S rRNA. May interact with the 5'-terminal helix region of 16S rRNA. The protein is Ribosome-binding factor A of Shewanella denitrificans (strain OS217 / ATCC BAA-1090 / DSM 15013).